Here is a 303-residue protein sequence, read N- to C-terminus: Trans-aconitate 2-methyltransferase (303 aa).

The tract at residues 271-303 (EGSGGSGGSGGSAGSAGCAGSGGSVGPAGEAGR) is disordered. Residues 272–303 (GSGGSGGSGGSAGSAGCAGSGGSVGPAGEAGR) show a composition bias toward gly residues.

It belongs to the methyltransferase superfamily. Tam family.

It localises to the cytoplasm. It catalyses the reaction trans-aconitate + S-adenosyl-L-methionine = (E)-3-(methoxycarbonyl)pent-2-enedioate + S-adenosyl-L-homocysteine. Functionally, catalyzes the S-adenosylmethionine monomethyl esterification of trans-aconitate. The polypeptide is Trans-aconitate 2-methyltransferase (Streptomyces coelicolor (strain ATCC BAA-471 / A3(2) / M145)).